The following is a 251-amino-acid chain: 3-deoxy-manno-octulosonate cytidylyltransferase (251 aa).

The protein belongs to the KdsB family.

The protein localises to the cytoplasm. The enzyme catalyses 3-deoxy-alpha-D-manno-oct-2-ulosonate + CTP = CMP-3-deoxy-beta-D-manno-octulosonate + diphosphate. It functions in the pathway nucleotide-sugar biosynthesis; CMP-3-deoxy-D-manno-octulosonate biosynthesis; CMP-3-deoxy-D-manno-octulosonate from 3-deoxy-D-manno-octulosonate and CTP: step 1/1. The protein operates within bacterial outer membrane biogenesis; lipopolysaccharide biosynthesis. In terms of biological role, activates KDO (a required 8-carbon sugar) for incorporation into bacterial lipopolysaccharide in Gram-negative bacteria. This is 3-deoxy-manno-octulosonate cytidylyltransferase from Brucella canis (strain ATCC 23365 / NCTC 10854 / RM-666).